A 416-amino-acid polypeptide reads, in one-letter code: Gasdermin-B (416 aa).

Residues 1 to 280 (MFSVFEEITR…EKRKDVLNSL (280 aa)) form a triggers pyroptosis region. A run of 2 beta stranded transmembrane segments spans residues 83–101 (EFQI…VRLP) and 102–125 (KEIT…ENRI). Residues lysine 166, lysine 177, lysine 190, and lysine 192 each participate in a (Microbial infection) Glycyl lysine isopeptide (Lys-Gly) (interchain with G-Cter in ubiquitin) cross-link. Beta stranded transmembrane passes span 167 to 183 (EETL…SQIS) and 184 to 198 (QGHL…REVT). Positions 229-250 (KSFPEEKDGASSCLGKSLGSED) are disordered. The stretch at 248–276 (SEDSRNMKEKLEDMESVLKDLTEEKRKDV) forms a coiled coil. Methionine 308 is covalently cross-linked ((Microbial infection) Glycyl lysine isopeptide (Lys-Gly) (interchain with G-Cter in ubiquitin)).

The protein belongs to the gasdermin family. In terms of assembly, homooligomer; homooligomeric ring-shaped pore complex containing 24-26 subunits when inserted in the membrane. Cleavage by granzyme A (GZMA) relieves autoinhibition by releasing the N-terminal moiety (Gasdermin-B, N-terminal) that initiates pyroptosis. Not cleaved by other granzymes. Major cleavage site takes places after Lys-244; a minor cleavage site takes place after Lys-229. Cleavage by neutrophil elastase ELANE, inhibits its ability to trigger pyroptosis. In terms of processing, palmitoylated. Post-translationally, (Microbial infection) Ubiquitinated by S.flexneri IpaH7.8, leading to its degradation by the proteasome, thereby preventing its ability to form pores in bacterial-derived membranes. As to expression, in the gastrointestinal tract, expressed in proliferating cells, including in the basal cell layer of esophagus and in isthmus/neck of stomach.

It is found in the cytoplasm. It localises to the cell membrane. With respect to regulation, the full-length protein before cleavage is inactive: intramolecular interactions between N- and C-terminal domains mediate autoinhibition in the absence of activation signal. The intrinsic pyroptosis-inducing activity is carried by the released N-terminal moiety (Gasdermin-B, N-terminal) following cleavage by granzyme A (GZMA). Its function is as follows. Precursor of a pore-forming protein that acts as a downstream mediator of granzyme-mediated cell death. This form constitutes the precursor of the pore-forming protein: upon cleavage, the released N-terminal moiety (Gasdermin-B, N-terminal) binds to membranes and forms pores, triggering pyroptosis. Also acts as a regulator of epithelial cell repair independently of programmed cell death: translocates to the plasma membrane and promotes epithelial maintenance and repair by regulating PTK2/FAK-mediated phosphorylation of PDGFA. Pore-forming protein produced by cleavage by granzyme A (GZMA), which causes membrane permeabilization and pyroptosis in target cells of cytotoxic T and natural killer (NK) cells. Key downstream mediator of granzyme-mediated cell death: (1) granzyme A (GZMA), delivered to target cells from cytotoxic T- and NK-cells, (2) specifically cleaves Gasdermin-B to generate this form. After cleavage, moves to the plasma membrane, homooligomerizes within the membrane and forms pores of 10-15 nanometers (nm) of inner diameter, triggering pyroptosis. The different isoforms recognize and bind different phospholipids on membranes, promoting cell death of different target cells. In terms of biological role, precursor of a pore-forming protein that acts as a downstream mediator of granzyme-mediated cell death and mediates pyroptosis. Following cleavage and activation by granzyme A (GZMA), the N-terminal part binds to membrane inner leaflet lipids, homooligomerizes within the human plasma membrane and forms pores of 10-15 nanometers (nm) of inner diameter, triggering pyroptosis. Recognizes and binds membrane inner leaflet lipids of human cells, such as phosphatidylinositol 4-phosphate, phosphatidylinositol 5-phosphate, bisphosphorylated phosphatidylinositols, such as phosphatidylinositol (4,5)-bisphosphate, and more weakly to phosphatidic acid. Also binds sufatide, a component of the apical membrane of epithelial cells. Functionally, precursor of a pore-forming protein that acts as a downstream mediator of granzyme-mediated cell death and mediates pyroptosis of human cells. Following cleavage and activation by granzyme A (GZMA), the N-terminal part binds to membrane inner leaflet lipids, homooligomerizes within the human plasma membrane and forms pores of 10-15 nanometers (nm) of inner diameter, triggering pyroptosis. Its function is as follows. Precursor of a pore-forming protein that acts as a downstream mediator of granzyme-mediated cell death and specifically mediates cell death of Gram-negative bacteria in response to infection. Following cleavage and activation by granzyme A (GZMA), the N-terminal part recognizes and binds phospholipids found on Gram-negative bacterial membranes, such as lipid A and cariolipin, homooligomerizes within the bacterial membranes and forms pores, triggering pyroptosis followed by cell death. In contrast to isoform 4, does not bind to membrane inner leaflet lipids of host human cell, such as phosphatidylinositol 4-phosphate, phosphatidylinositol 5-phosphate, bisphosphorylated phosphatidylinositols, such as phosphatidylinositol (4,5)-bisphosphate. Not able to trigger pyroptosis. The polypeptide is Gasdermin-B (Homo sapiens (Human)).